Here is a 429-residue protein sequence, read N- to C-terminus: RNA-binding protein BRN2 (429 aa).

3 consecutive RRM domains span residues 12–93 (VKLF…YADG), 100–180 (HKLF…WADT), and 330–408 (ANLF…LKRD). Residues 410 to 429 (GQQQQQQQSKNPLFNGLLNS) are disordered. A compositionally biased stretch (polar residues) spans 418–429 (SKNPLFNGLLNS).

Expressed in roots, stems, flowers and siliques.

The protein resides in the cytoplasm. RNA-binding protein involved in the regulation of flowering time. Acts as a repressor of the activity of SOC1, a transcriptional activator of flowering time. Binds to the 3'-UTR of SOC1 mRNA in the cytoplasm and participates in SOC1 mRNA decay, mediated by the distal region of the SOC1 3'-UTR. This Arabidopsis thaliana (Mouse-ear cress) protein is RNA-binding protein BRN2.